The chain runs to 546 residues: 2-isopropylmalate synthase (546 aa).

A Pyruvate carboxyltransferase domain is found at 8–271 (ILIFDTTLRD…NKFFNRNSDS (264 aa)). Residues Asp17, His208, His210, and Asn244 each contribute to the Mn(2+) site. A regulatory domain region spans residues 408-546 (QLSLVQVSCG…DKTLLSNPGK (139 aa)).

This sequence belongs to the alpha-IPM synthase/homocitrate synthase family. LeuA type 1 subfamily. As to quaternary structure, homodimer. Requires Mn(2+) as cofactor.

It localises to the cytoplasm. It catalyses the reaction 3-methyl-2-oxobutanoate + acetyl-CoA + H2O = (2S)-2-isopropylmalate + CoA + H(+). Its pathway is amino-acid biosynthesis; L-leucine biosynthesis; L-leucine from 3-methyl-2-oxobutanoate: step 1/4. Its function is as follows. Catalyzes the condensation of the acetyl group of acetyl-CoA with 3-methyl-2-oxobutanoate (2-ketoisovalerate) to form 3-carboxy-3-hydroxy-4-methylpentanoate (2-isopropylmalate). This Prochlorococcus marinus (strain MIT 9215) protein is 2-isopropylmalate synthase.